We begin with the raw amino-acid sequence, 259 residues long: Apolipoprotein A-I (259 aa).

An N-terminal signal peptide occupies residues 1–18 (MKAAVLAVALVFLTGCQA). Repeat copies occupy residues 67-88 (LNLL…EQLG) and 89-110 (PVTQ…NEMN). The segment at 67–259 (LNLLDNWDTL…IDEAKKKLNA (193 aa)) is 10 X approximate tandem repeats. At Met109 the chain carries Methionine sulfoxide. Residues 111–121 (KDLENVKQKMQ) form a 3; half-length repeat. The stretch at 122–143 (PHLDEFQEKWNEEVEAYRQKLE) is repeat 4. The stretch at 144 to 161 (PLGTELHKNAKEMQRHLK) is one 5; truncated repeat. Residues 162–183 (VVAEEFRDRMRVNADALRAKFG) form repeat 6. A 7; truncated repeat occupies 184–203 (LYSDQMRENLAQRLTEIKNH). Methionine sulfoxide is present on Met189. The stretch at 204–225 (PTLIEYHTKASDHLKTLGEKAK) is repeat 8. One copy of the 9; half-length repeat lies at 226-236 (PALDDLGQGLM). Met236 carries the post-translational modification Methionine sulfoxide. Repeat 10 spans residues 237–259 (PVLEAWKAKIMSMIDEAKKKLNA).

Belongs to the apolipoprotein A1/A4/E family. As to quaternary structure, homodimer. Interacts with APOA1BP and CLU. Component of a sperm activating protein complex (SPAP), consisting of APOA1, an immunoglobulin heavy chain, an immunoglobulin light chain and albumin. Interacts with NDRG1. Interacts with SCGB3A2. Interacts with NAXE and YJEFN3. Glycosylated. Post-translationally, palmitoylated. In terms of processing, phosphorylation sites are present in the extracellular medium. In terms of tissue distribution, major protein of plasma HDL, also found in chylomicrons.

The protein localises to the secreted. Functionally, participates in the reverse transport of cholesterol from tissues to the liver for excretion by promoting cholesterol efflux from tissues and by acting as a cofactor for the lecithin cholesterol acyltransferase (LCAT). As part of the SPAP complex, activates spermatozoa motility. This chain is Apolipoprotein A-I (Apoa1), found in Rattus norvegicus (Rat).